Reading from the N-terminus, the 286-residue chain is 1D-myo-inositol 2-acetamido-2-deoxy-alpha-D-glucopyranoside deacetylase (286 aa).

Zn(2+) is bound by residues H12, D15, and H147.

It belongs to the MshB deacetylase family. Zn(2+) serves as cofactor.

The enzyme catalyses 1D-myo-inositol 2-acetamido-2-deoxy-alpha-D-glucopyranoside + H2O = 1D-myo-inositol 2-amino-2-deoxy-alpha-D-glucopyranoside + acetate. In terms of biological role, catalyzes the deacetylation of 1D-myo-inositol 2-acetamido-2-deoxy-alpha-D-glucopyranoside (GlcNAc-Ins) in the mycothiol biosynthesis pathway. This chain is 1D-myo-inositol 2-acetamido-2-deoxy-alpha-D-glucopyranoside deacetylase, found in Thermobifida fusca (strain YX).